A 757-amino-acid chain; its full sequence is Endosialin (757 aa).

Positions 1-17 (MLLRLLLAWAAAGPTLG) are cleaved as a signal peptide. The Extracellular segment spans residues 18–687 (QDPWAAEPRA…EHSQRDDRWL (670 aa)). The C-type lectin domain occupies 30 to 156 (GPSSCYALFP…CTLAVDGYLC (127 aa)). Residue Thr60 is glycosylated (O-linked (GalNAc...) threonine). Cys131 and Cys147 form a disulfide bridge. The Sushi domain maps to 162–232 (GACPALQDEA…WSRAGPLCLG (71 aa)). In terms of domain architecture, EGF-like; calcium-binding spans 312–351 (DTDECQIAGVCQQMCVNYVGGFECYCSEGHELEADGISCS). 3 cysteine pairs are disulfide-bonded: Cys316/Cys326, Cys322/Cys335, and Cys337/Cys350. O-linked (GalNAc...) threonine glycosylation is found at Thr401, Thr428, Thr448, Thr456, Thr459, Thr472, Thr519, Thr541, Thr543, Thr544, Thr545, Thr587, Thr593, Thr594, and Thr595. O-linked (GalNAc...) serine glycosylation is found at Ser598 and Ser601. Thr612 and Thr619 each carry an O-linked (GalNAc...) threonine glycan. A compositionally biased stretch (low complexity) spans 618–627 (PTLLPSQSPT). Residues 618–662 (PTLLPSQSPTNQTSPISPTHPHSKAPQIPREDGPSPKLALWLPSP) form a disordered region. O-linked (GalNAc...) serine glycans are attached at residues Ser623 and Ser625. Residues Thr627 and Thr630 are each glycosylated (O-linked (GalNAc...) threonine). The O-linked (GalNAc...) serine glycan is linked to Ser631. Thr636 carries O-linked (GalNAc...) threonine glycosylation. O-linked (GalNAc...) serine glycosylation is present at Ser640. Residues 688 to 708 (LVALLVPTCVFLVVLLALGIV) form a helical membrane-spanning segment. Topologically, residues 709–757 (YCTRCGPHAPNKRITDCYRWVIHAGSKSPTEPMPPRGSLTGVQTCRTSV) are cytoplasmic. The disordered stretch occupies residues 737 to 757 (PTEPMPPRGSLTGVQTCRTSV). Phosphoserine is present on Ser746. Polar residues predominate over residues 748–757 (TGVQTCRTSV).

Interacts with PDGFRA; this interaction promotes PDGF receptor signaling pathway. Interacts with integrin beta-1/ITGB1. Interacts with insulin receptor/INSR; this interaction diminishes INSR autophosphorylation. In terms of processing, O-glycosylated with sialylated oligosaccharides. May be N-glycosylated. As to expression, expressed in tumor endothelial cells but absent or barely detectable in normal endothelial cells. Expressed in metastatic lesions of the liver and during angiogenesis of corpus luteum formation and wound healing. Expressed in vascular endothelial cells of malignant tumors but not in normal blood vessels. Expressed in stromal fibroblasts. Strongly expressed in pericytes. Expressed on stromal cells and cells with lymphoid morphology such a T-cells.

Its subcellular location is the membrane. In terms of biological role, cell surface glycoprotein involved in various biological processes including angiogenesis, immune response modulation, and tissue remodeling and repair. Participates in pericyte proliferation through positive modulation of the PDGF receptor signaling pathway. Acts as a scaffold for factor X, triggering allosteric changes and the spatial re-alignment of factor X with the TF-factor VIIa complex, thereby enhancing coagulation activation. Modulates the insulin signaling pathway by interacting with insulin receptor/INSR and by diminishing its capacity to be autophosphorylated in response to insulin. Also regulates LPS-induced inflammatory response in macrophages by favoring the production of proinflammatory cytokines. In human, negatively regulates T-cell proliferation compared with stromal cells where it increases proliferation. The protein is Endosialin (CD248) of Homo sapiens (Human).